We begin with the raw amino-acid sequence, 277 residues long: Urease accessory protein UreD (277 aa).

The protein belongs to the UreD family. In terms of assembly, ureD, UreF and UreG form a complex that acts as a GTP-hydrolysis-dependent molecular chaperone, activating the urease apoprotein by helping to assemble the nickel containing metallocenter of UreC. The UreE protein probably delivers the nickel.

It is found in the cytoplasm. Its function is as follows. Required for maturation of urease via the functional incorporation of the urease nickel metallocenter. The chain is Urease accessory protein UreD from Pseudomonas putida (strain W619).